Here is a 421-residue protein sequence, read N- to C-terminus: MGKDYTFIRNWISFHFMGNINNFSYCVVNAASGNLSAYFHNSKNIGIILWANIAFGLVSRLVNTFLIENVNSKLKIVVNCLFMSIGLIGVALSVYVNFGFCIAAIAFVGIASSFGESVILSYMKKFPAELVNGWSSGTGIAGVCGSLFYIAMVAAGLSNSTIFYMMLPTVAVYFLLFFFGLKVPNHLEEDRTDNHNNSNNSSNNSKYTEKQSLVKKDQLIEDIDDGGGAEVAPPGETKKQRYIRCARLVWFNAVNLALVYFFEYVASVGGADLALKKDPNNDNFFIANAFAIFSFCYQLGVLISRSSLQFVKIKHIGVITILQGINMVFWIIQAKYKMVTSVWVLFILMVYCGLLGGASYVNVFYLILHQKNIPNEDRELCINYAALLVTVGITLAACFILVMDHTFLASEVPKTDSSSST.

Transmembrane regions (helical) follow at residues 13-35, 47-67, 74-96, 101-123, and 137-157; these read SFHF…SGNL, IILW…TFLI, LKIV…SVYV, CIAA…LSYM, and GTGI…AAGL. Residue Asn159 is glycosylated (N-linked (GlcNAc...) asparagine). A helical membrane pass occupies residues 161 to 181; sequence TIFYMMLPTVAVYFLLFFFGL. Residues 190–211 are disordered; it reads DRTDNHNNSNNSSNNSKYTEKQ. Residues 195–205 show a composition bias toward low complexity; it reads HNNSNNSSNNS. Residues Asn196, Asn199, Asn200, and Asn203 are each glycosylated (N-linked (GlcNAc...) asparagine). 5 consecutive transmembrane segments (helical) span residues 248–268, 284–304, 313–333, 338–358, and 382–402; these read LVWF…VASV, FFIA…VLIS, IKHI…WIIQ, MVTS…LGGA, and INYA…FILV.

It belongs to the battenin family.

It localises to the lysosome membrane. This is Battenin (cln3) from Dictyostelium discoideum (Social amoeba).